The sequence spans 859 residues: Leucine--tRNA ligase (859 aa).

The short motif at 42–52 is the 'HIGH' region element; it reads PYPSGRLHMGH. The 'KMSKS' region signature appears at 618 to 622; it reads KMSKS. K621 serves as a coordination point for ATP.

This sequence belongs to the class-I aminoacyl-tRNA synthetase family.

It localises to the cytoplasm. The catalysed reaction is tRNA(Leu) + L-leucine + ATP = L-leucyl-tRNA(Leu) + AMP + diphosphate. This is Leucine--tRNA ligase from Shewanella woodyi (strain ATCC 51908 / MS32).